The chain runs to 370 residues: Holliday junction branch migration complex subunit RuvB 2 (370 aa).

Residues 1–54 (MAIISSRAAGAEDPGQRQQKSSARRRESKLAFARAEGLLQPQAHPSEAQEESLR) are disordered. Residues 13–214 (DPGQRQQKSS…FGQVQRLRFY (202 aa)) form a large ATPase domain (RuvB-L) region. Residues Leu-53, Arg-54, Gly-95, Lys-98, Thr-99, Thr-100, 161–163 (EDF), Arg-204, Tyr-214, and Arg-251 contribute to the ATP site. Thr-99 is a binding site for Mg(2+). Residues 215–285 (EPHELAEIVL…VAAAALELFQ (71 aa)) form a small ATPAse domain (RuvB-S) region. Positions 288-370 (PMGLDWTDRK…TAQSPLPVWS (83 aa)) are head domain (RuvB-H). DNA contacts are provided by Arg-343 and Arg-348.

It belongs to the RuvB family. Homohexamer. Forms an RuvA(8)-RuvB(12)-Holliday junction (HJ) complex. HJ DNA is sandwiched between 2 RuvA tetramers; dsDNA enters through RuvA and exits via RuvB. An RuvB hexamer assembles on each DNA strand where it exits the tetramer. Each RuvB hexamer is contacted by two RuvA subunits (via domain III) on 2 adjacent RuvB subunits; this complex drives branch migration. In the full resolvosome a probable DNA-RuvA(4)-RuvB(12)-RuvC(2) complex forms which resolves the HJ.

Its subcellular location is the cytoplasm. The enzyme catalyses ATP + H2O = ADP + phosphate + H(+). The RuvA-RuvB-RuvC complex processes Holliday junction (HJ) DNA during genetic recombination and DNA repair, while the RuvA-RuvB complex plays an important role in the rescue of blocked DNA replication forks via replication fork reversal (RFR). RuvA specifically binds to HJ cruciform DNA, conferring on it an open structure. The RuvB hexamer acts as an ATP-dependent pump, pulling dsDNA into and through the RuvAB complex. RuvB forms 2 homohexamers on either side of HJ DNA bound by 1 or 2 RuvA tetramers; 4 subunits per hexamer contact DNA at a time. Coordinated motions by a converter formed by DNA-disengaged RuvB subunits stimulates ATP hydrolysis and nucleotide exchange. Immobilization of the converter enables RuvB to convert the ATP-contained energy into a lever motion, pulling 2 nucleotides of DNA out of the RuvA tetramer per ATP hydrolyzed, thus driving DNA branch migration. The RuvB motors rotate together with the DNA substrate, which together with the progressing nucleotide cycle form the mechanistic basis for DNA recombination by continuous HJ branch migration. Branch migration allows RuvC to scan DNA until it finds its consensus sequence, where it cleaves and resolves cruciform DNA. The protein is Holliday junction branch migration complex subunit RuvB 2 of Synechococcus sp. (strain JA-3-3Ab) (Cyanobacteria bacterium Yellowstone A-Prime).